A 198-amino-acid polypeptide reads, in one-letter code: Na(+)-translocating NADH-quinone reductase subunit E (198 aa).

The next 6 helical transmembrane spans lie at 11–31 (SIFIENMALSFFLGMCTFLAV), 39–59 (FGLGVAVIVVLTIAIPVNNLV), 77–97 (FLNFITFIGVIAALVQILEMI), 110–130 (GIFLPLITVNCAIFGGVSFMV), 140–160 (IVYGFGSGVGWMLAIVALAGI), and 176–196 (LGITFITVGLMALGFMSFSGV).

Belongs to the NqrDE/RnfAE family. In terms of assembly, composed of six subunits; NqrA, NqrB, NqrC, NqrD, NqrE and NqrF.

It localises to the cell inner membrane. It carries out the reaction a ubiquinone + n Na(+)(in) + NADH + H(+) = a ubiquinol + n Na(+)(out) + NAD(+). In terms of biological role, NQR complex catalyzes the reduction of ubiquinone-1 to ubiquinol by two successive reactions, coupled with the transport of Na(+) ions from the cytoplasm to the periplasm. NqrA to NqrE are probably involved in the second step, the conversion of ubisemiquinone to ubiquinol. The sequence is that of Na(+)-translocating NADH-quinone reductase subunit E from Photobacterium profundum (strain SS9).